The following is an 86-amino-acid chain: U15-lycotoxin-Ls1d (86 aa).

The signal sequence occupies residues 1-20 (MNSKIFAVLLLLALLSCVLS). In terms of domain architecture, WAP spans 21-66 (DQYCPKSSITACKKMNIRNDCCKDDDCTGGSWCCATPCGNFCKYPT). 5 disulfide bridges follow: C24–C54, C32–C58, C41–C53, C42–C80, and C47–C62.

This sequence belongs to the venom protein 11 family. 01 (wap-1) subfamily. Contains 5 disulfide bonds. Expressed by the venom gland.

The protein resides in the secreted. Functionally, has antibacterial activity. The sequence is that of U15-lycotoxin-Ls1d from Lycosa singoriensis (Wolf spider).